A 100-amino-acid chain; its full sequence is Large ribosomal subunit protein uL23 (100 aa).

Belongs to the universal ribosomal protein uL23 family. Part of the 50S ribosomal subunit. Contacts protein L29, and trigger factor when it is bound to the ribosome.

One of the early assembly proteins it binds 23S rRNA. One of the proteins that surrounds the polypeptide exit tunnel on the outside of the ribosome. Forms the main docking site for trigger factor binding to the ribosome. The polypeptide is Large ribosomal subunit protein uL23 (Baumannia cicadellinicola subsp. Homalodisca coagulata).